The sequence spans 278 residues: Shikimate dehydrogenase (NADP(+)) (278 aa).

Shikimate is bound by residues 19–21 (SRS) and T66. K70 functions as the Proton acceptor in the catalytic mechanism. N91 and D106 together coordinate shikimate. NADP(+) contacts are provided by residues 129 to 133 (GAGGA) and F221. Shikimate is bound at residue Y223. G242 contacts NADP(+).

Belongs to the shikimate dehydrogenase family. As to quaternary structure, homodimer.

The enzyme catalyses shikimate + NADP(+) = 3-dehydroshikimate + NADPH + H(+). It participates in metabolic intermediate biosynthesis; chorismate biosynthesis; chorismate from D-erythrose 4-phosphate and phosphoenolpyruvate: step 4/7. Its function is as follows. Involved in the biosynthesis of the chorismate, which leads to the biosynthesis of aromatic amino acids. Catalyzes the reversible NADPH linked reduction of 3-dehydroshikimate (DHSA) to yield shikimate (SA). The chain is Shikimate dehydrogenase (NADP(+)) from Anaeromyxobacter sp. (strain K).